A 142-amino-acid polypeptide reads, in one-letter code: Hemoglobin subunit alpha-2 (142 aa).

Residues 2–142 (VLSAADKSNI…VSTVLTSKYR (141 aa)) form the Globin domain. H59 provides a ligand contact to O2. H88 contributes to the heme b binding site.

Belongs to the globin family. As to quaternary structure, heterotetramer of two alpha chains and two beta chains. Red blood cells.

In terms of biological role, involved in oxygen transport from the lung to the various peripheral tissues. This chain is Hemoglobin subunit alpha-2, found in Bubalus bubalis (Domestic water buffalo).